The following is a 339-amino-acid chain: Phosphate acyltransferase (339 aa).

The protein belongs to the PlsX family. Homodimer. Probably interacts with PlsY.

It is found in the cytoplasm. It catalyses the reaction a fatty acyl-[ACP] + phosphate = an acyl phosphate + holo-[ACP]. Its pathway is lipid metabolism; phospholipid metabolism. In terms of biological role, catalyzes the reversible formation of acyl-phosphate (acyl-PO(4)) from acyl-[acyl-carrier-protein] (acyl-ACP). This enzyme utilizes acyl-ACP as fatty acyl donor, but not acyl-CoA. This is Phosphate acyltransferase from Methylococcus capsulatus (strain ATCC 33009 / NCIMB 11132 / Bath).